Consider the following 407-residue polypeptide: MDWDNIFSYNTAKIVTIKDRRLGGLHIIFMVLIIVYIVIYSTIYKKGYLLTETPVGSIRASLLAPNEFKDDSNFKYCDDNLIEYNFTKLECDYYDEAFVSFPVGDDVSFAVTTRVKTLDQVLNCSSKNPKCKYTTVSTRNVYVSDIEDFTILIDHTMFAPSSLIQYNSKQLKGYILDNDNNEIQINETINTVGIPGKPDILTIGKLLQLANIDLDGASSVNSTNSVRYDGVVALVFITYSNTFSYNTNNFKYVYSIQKVEDTEYGVPEAVILDNVSSRMYYNRHGIRLIFIQNGEIGSFNFQALLLTFVSGLGLLAISTVLVDQLAIRFLPERKTYSSHKFQITHGFSESRNKLRISQNEKDPLLLVETTKNNENNNNNDDYNDDDNEIFDDNNNGYQNIQNNNIIL.

Topologically, residues M1 to L22 are cytoplasmic. The helical transmembrane segment at G23 to I43 threads the bilayer. The Lumenal segment spans residues Y44–N300. Residues R283 to I296 form a pore-forming motif region. Residues F301–L321 traverse the membrane as a helical segment. The Cytoplasmic segment spans residues V322–L407. The tract at residues K371 to N394 is disordered. The segment covering D381–D391 has biased composition (acidic residues).

This sequence belongs to the P2X receptor family.

Its subcellular location is the contractile vacuole membrane. Its function is as follows. P2X receptors are ligand-gated ion channels that play a role in intracellular calcium signaling. ATP does not evoke inward currents in p2xD. Not essential for osmoregulation. The sequence is that of P2X receptor D (p2xD) from Dictyostelium discoideum (Social amoeba).